Reading from the N-terminus, the 305-residue chain is tRNA pseudouridine synthase B (305 aa).

The Nucleophile role is filled by Asp48.

The protein belongs to the pseudouridine synthase TruB family. Type 1 subfamily.

The catalysed reaction is uridine(55) in tRNA = pseudouridine(55) in tRNA. Functionally, responsible for synthesis of pseudouridine from uracil-55 in the psi GC loop of transfer RNAs. This Actinobacillus pleuropneumoniae serotype 5b (strain L20) protein is tRNA pseudouridine synthase B.